The following is a 267-amino-acid chain: Inositol-1-monophosphatase (267 aa).

Residues E66, D84, L86, and D87 each coordinate Mg(2+). E66 provides a ligand contact to substrate. Substrate is bound by residues 86–89, R182, and D213; that span reads LDGS. D213 is a Mg(2+) binding site.

The protein belongs to the inositol monophosphatase superfamily. It depends on Mg(2+) as a cofactor.

The catalysed reaction is a myo-inositol phosphate + H2O = myo-inositol + phosphate. This chain is Inositol-1-monophosphatase (suhB), found in Aeropyrum pernix (strain ATCC 700893 / DSM 11879 / JCM 9820 / NBRC 100138 / K1).